Consider the following 205-residue polypeptide: High frequency lysogenization protein HflD homolog (205 aa).

The protein belongs to the HflD family.

Its subcellular location is the cytoplasm. It localises to the cell inner membrane. This is High frequency lysogenization protein HflD homolog from Shewanella halifaxensis (strain HAW-EB4).